We begin with the raw amino-acid sequence, 72 residues long: Conotoxin TxMMSK-04 (72 aa).

Residues 1–20 (MMSKLGVLLTICLLLFPLTA) form the signal peptide. Residues 21–51 (VPLDGDQPADRPAERMQDGISSEHHPFFDSV) constitute a propeptide that is removed on maturation. Position 55 is a pyrrolidone carboxylic acid (Gln-55). Disulfide bonds link Cys-57/Cys-71, Cys-58/Cys-67, and Cys-63/Cys-70. Residue Pro-69 is modified to 4-hydroxyproline. Cys-71 is subject to Cysteine amide.

This sequence belongs to the conotoxin M superfamily. As to expression, expressed by the venom duct.

It is found in the secreted. The sequence is that of Conotoxin TxMMSK-04 from Conus textile (Cloth-of-gold cone).